The following is a 297-amino-acid chain: tRNA dimethylallyltransferase (297 aa).

Position 15–22 (15–22) interacts with ATP; that stretch reads GPTASGKS. 17 to 22 serves as a coordination point for substrate; sequence TASGKS. Interaction with substrate tRNA stretches follow at residues 40–43 and 164–168; these read DSMQ and QRIVR.

This sequence belongs to the IPP transferase family. Monomer. Mg(2+) serves as cofactor.

It carries out the reaction adenosine(37) in tRNA + dimethylallyl diphosphate = N(6)-dimethylallyladenosine(37) in tRNA + diphosphate. Catalyzes the transfer of a dimethylallyl group onto the adenine at position 37 in tRNAs that read codons beginning with uridine, leading to the formation of N6-(dimethylallyl)adenosine (i(6)A). This chain is tRNA dimethylallyltransferase, found in Rhizobium leguminosarum bv. trifolii (strain WSM2304).